We begin with the raw amino-acid sequence, 947 residues long: Protein NETWORKED 2A (947 aa).

The 81-residue stretch at 10–90 (YSWWWASHIR…ERYDHLSREL (81 aa)) folds into the NAB domain. Residues 105–131 (VQFPLEDDSDENEDYDGRPRKPPKHLH) form a disordered region. Residues 109–118 (LEDDSDENED) show a composition bias toward acidic residues. Coiled coils occupy residues 348–454 (KLAE…IQDV) and 568–619 (VLRD…QKLD). 2 stretches are compositionally biased toward basic and acidic residues: residues 618–627 (LDTTGKDSPH) and 635–644 (LEHEQGHHET). Disordered regions lie at residues 618 to 675 (LDTT…RTKS), 743 to 763 (RIESKQQQESPRSSSNTAVAS), and 911 to 947 (KNRQQKQSASSLFSCVSPSPGLHKQSSYSRPPGKLPE). Positions 645–660 (VSISPTSNFSVATTPH) are enriched in polar residues. Residues 662–675 (QVGDVKRTPGRTKS) show a composition bias toward basic and acidic residues. Residues 722-809 (VHQIQKYQTT…LANIQEEIAR (88 aa)) are a coiled coil. 2 stretches are compositionally biased toward polar residues: residues 749 to 761 (QQESPRSSSNTAV) and 915 to 927 (QKQSASSLFSCVS).

This sequence belongs to the NET family. As to expression, expressed specifically in pollen.

The protein resides in the cell membrane. Its function is as follows. Plant-specific actin binding protein. Associates with F-actin at the plasma membrane in growing pollen tubes. May be part of a membrane-cytoskeletal adapter complex. The protein is Protein NETWORKED 2A of Arabidopsis thaliana (Mouse-ear cress).